Reading from the N-terminus, the 423-residue chain is Probable electron transfer flavoprotein-quinone oxidoreductase YgcN (423 aa).

An FAD-binding site is contributed by 7–21 (IIIIGAGIAGTACAL).

Belongs to the ETF-QO/FixC family. It depends on FAD as a cofactor.

Probably accepts electrons from YgcQ/YgcR and reduces a quinone. The polypeptide is Probable electron transfer flavoprotein-quinone oxidoreductase YgcN (ygcN) (Escherichia coli (strain K12)).